A 487-amino-acid chain; its full sequence is Keratin, type I cytoskeletal 12 (487 aa).

Residues 1–118 are head; the sequence is MSLSVCTSAL…GNDGGLLSGS (118 aa). Positions 119–154 are coil 1A; sequence EKETMQNLNDRLASYLGKVRSLEEANAELENKIREW. The IF rod domain occupies 119-433; the sequence is EKETMQNLND…RLLEGDSQGD (315 aa). A linker 1 region spans residues 158 to 175; it reads RRTRDAGSQSDYSKYYPL. The tract at residues 176 to 267 is coil 1B; the sequence is IEDLKNKIVS…KNHEEELQSF (92 aa). Residues 268–290 form a linker 12 region; that stretch reads QAGGPGEVNVEMDAAPGVDLTKV. Positions 291–428 are coil 2; that stretch reads LNEMRAQYEA…IETYRRLLEG (138 aa). The tract at residues 428–461 is disordered; it reads GDSQGDGFDESSSLSVSKPQTPSVDSSKDPNKTR. The segment at 429–487 is tail; it reads DSQGDGFDESSSLSVSKPQTPSVDSSKDPNKTRKIKTVVQEIVNGEVVSSQVQELEEEM. The segment covering 437-452 has biased composition (polar residues); it reads ESSSLSVSKPQTPSVD.

Belongs to the intermediate filament family. As to quaternary structure, heterotetramer of two type I and two type II keratins. Keratin-3 associates with keratin-12. As to expression, expressed in the corneal epithelium (at protein level). Also expressed in the suprabasal limbal epithelium of the cornea (at protein level).

Involved in corneal epithelium organization, integrity and corneal keratin expression. The chain is Keratin, type I cytoskeletal 12 (Krt12) from Mus musculus (Mouse).